The chain runs to 157 residues: Protein Smg homolog (157 aa).

This sequence belongs to the Smg family.

The sequence is that of Protein Smg homolog from Idiomarina loihiensis (strain ATCC BAA-735 / DSM 15497 / L2-TR).